Reading from the N-terminus, the 1015-residue chain is MPRATALGALVSLLLLLPLPRGAGGLGERPDATADYSELDGEEGTEQQLEHYHDPCKAAVFWGDIALDEDDLKLFHIDKARDWTKQTVGATGHSTGGLEEQASESSPDTTAMDTGTKEAGKDGRENTTLLHSPGTLHAAAKTFSPRVRRATTSRTERIWPGGVIPYVIGGNFTGSQRAIFKQAMRHWEKHTCVTFIERTDEESFIVFSYRTCGCCSYVGRRGGGPQAISIGKNCDKFGIVAHELGHVVGFWHEHTRPDRDQHVTIIRENIQPGQEYNFLKMEAGEVSSLGETYDFDSIMHYARNTFSRGVFLDTILPRQDDNGVRPTIGQRVRLSQGDIAQARKLYKCPACGETLQDTTGNFSAPGFPNGYPSYSHCVWRISVTPGEKIVLNFTSMDLFKSRLCWYDYVEVRDGYWRKAPLLGRFCGDKIPEPLVSTDSRLWVEFRSSSNILGKGFFAAYEATCGGDMNKDAGQIQSPNYPDDYRPSKECVWRITVSEGFHVGLTFQAFEIERHDSCAYDYLEVRDGPTEESALIGHFCGYEKPEDVKSSSNRLWMKFVSDGSINKAGFAANFFKEVDECSWPDHGGCEHRCVNTLGSYKCACDPGYELAADKKMCEVACGGFITKLNGTITSPGWPKEYPTNKNCVWQVVAPAQYRISLQFEVFELEGNDVCKYDFVEVRSGLSPDAKLHGRFCGSETPEVITSQSNNMRVEFKSDNTVSKRGFRAHFFSDKDECAKDNGGCQHECVNTFGSYLCRCRNGYWLHENGHDCKEAGCAHKISSVEGTLASPNWPDKYPSRRECTWNISSTAGHRVKLTFNEFEIEQHQECAYDHLEMYDGPDSLAPILGRFCGSKKPDPTVASGSSMFLRFYSDASVQRKGFQAVHSTECGGRLKAEVQTKELYSHAQFGDNNYPSEARCDWVIVAEDGYGVELTFRTFEVEEEADCGYDYMEAYDGYDSSAPRLGRFCGSGPLEEIYSAGDSLMIRFRTDDTINKKGFHARYTSTKFQDALHMKK.

A signal peptide spans methionine 1–glycine 25. 2 disordered regions span residues glycine 24–leucine 49 and valine 88–leucine 130. Positions leucine 26–arginine 149 are excised as a propeptide. A compositionally biased stretch (polar residues) spans serine 103–aspartate 113. Over residues glycine 115–glutamate 125 the composition is skewed to basic and acidic residues. In terms of domain architecture, Peptidase M12A spans arginine 149 to proline 349. Asparagine 171 is a glycosylation site (N-linked (GlcNAc...) asparagine). 4 disulfide bridges follow: cysteine 192–cysteine 348, cysteine 212–cysteine 234, cysteine 214–cysteine 215, and cysteine 351–cysteine 377. Histidine 242 serves as a coordination point for Zn(2+). The active site involves glutamate 243. Histidine 246 and histidine 252 together coordinate Zn(2+). CUB domains lie at cysteine 351–threonine 463 and cysteine 464–glutamate 576. N-linked (GlcNAc...) asparagine glycans are attached at residues asparagine 361 and asparagine 392. 12 cysteine pairs are disulfide-bonded: cysteine 404–cysteine 426, cysteine 464–cysteine 490, cysteine 517–cysteine 539, cysteine 580–cysteine 592, cysteine 588–cysteine 601, cysteine 603–cysteine 616, cysteine 620–cysteine 646, cysteine 673–cysteine 695, cysteine 736–cysteine 747, cysteine 743–cysteine 756, cysteine 758–cysteine 771, and cysteine 776–cysteine 802. Residues glutamate 576–glutamate 617 enclose the EGF-like 1; calcium-binding domain. Residues cysteine 620–aspartate 732 form the CUB 3 domain. An N-linked (GlcNAc...) asparagine glycan is attached at asparagine 628. The EGF-like 2; calcium-binding domain occupies aspartate 732–lysine 772. CUB domains lie at cysteine 776–glutamate 888 and cysteine 889–threonine 1005. N-linked (GlcNAc...) asparagine glycosylation is present at asparagine 805. 3 disulfide bridges follow: cysteine 829/cysteine 851, cysteine 889/cysteine 919, and cysteine 946/cysteine 968. Arginine 963 and arginine 966 each carry omega-N-methylarginine.

Requires Zn(2+) as cofactor.

The protein resides in the secreted. Its function is as follows. Protease which specifically processes pro-lysyl oxidase. Required for the embryonic development. Predominant protease, which in the development, influences dorsal-ventral patterning and skeletogenesis. In Homo sapiens (Human), this protein is Tolloid-like protein 2 (TLL2).